The sequence spans 527 residues: Peptide chain release factor 3 (527 aa).

Residues A9 to L277 enclose the tr-type G domain. Residues S18–T25, D86–H90, and N140–D143 each bind GTP.

The protein belongs to the TRAFAC class translation factor GTPase superfamily. Classic translation factor GTPase family. PrfC subfamily.

The protein localises to the cytoplasm. Increases the formation of ribosomal termination complexes and stimulates activities of RF-1 and RF-2. It binds guanine nucleotides and has strong preference for UGA stop codons. It may interact directly with the ribosome. The stimulation of RF-1 and RF-2 is significantly reduced by GTP and GDP, but not by GMP. The protein is Peptide chain release factor 3 of Pseudomonas putida (strain ATCC 47054 / DSM 6125 / CFBP 8728 / NCIMB 11950 / KT2440).